A 159-amino-acid polypeptide reads, in one-letter code: F1845 fimbrial protein (159 aa).

The N-terminal stretch at 1-21 (MKKLAIMAAASMIFTVGSAQA) is a signal peptide.

This sequence belongs to the Dr-adhesin family.

Its subcellular location is the fimbrium. Its function is as follows. Hemagglutinins of uropathogenic E.coli mediate adherence to the upper urinary tract. These adhesins bind to the Dr blood group antigen and also agglutinate human erythrocytes in the presence of D-mannose (mannose-resistant hemagglutination (MRHA)). C1845 is a strain responsible for diarrheal disease. The sequence is that of F1845 fimbrial protein (daaE) from Escherichia coli.